The chain runs to 341 residues: Methionine import ATP-binding protein MetN 1 (341 aa).

The ABC transporter domain occupies 2 to 241 (IEFRQVSKSF…PKTTIAQNFV (240 aa)). 38 to 45 (GYSGAGKS) is an ATP binding site.

Belongs to the ABC transporter superfamily. Methionine importer (TC 3.A.1.24) family. As to quaternary structure, the complex is composed of two ATP-binding proteins (MetN), two transmembrane proteins (MetI) and a solute-binding protein (MetQ).

The protein localises to the cell membrane. The catalysed reaction is L-methionine(out) + ATP + H2O = L-methionine(in) + ADP + phosphate + H(+). It catalyses the reaction D-methionine(out) + ATP + H2O = D-methionine(in) + ADP + phosphate + H(+). In terms of biological role, part of the ABC transporter complex MetNIQ involved in methionine import. Responsible for energy coupling to the transport system. This chain is Methionine import ATP-binding protein MetN 1, found in Staphylococcus aureus (strain Mu50 / ATCC 700699).